The following is a 477-amino-acid chain: 3-isopropylmalate dehydratase large subunit (477 aa).

[4Fe-4S] cluster is bound by residues Cys-347, Cys-407, and Cys-410. Positions 418-442 are disordered; that stretch reads LAPGERSASTSNRNFEGRQGKGGRT.

It belongs to the aconitase/IPM isomerase family. LeuC type 1 subfamily. Heterodimer of LeuC and LeuD. [4Fe-4S] cluster serves as cofactor.

The catalysed reaction is (2R,3S)-3-isopropylmalate = (2S)-2-isopropylmalate. It participates in amino-acid biosynthesis; L-leucine biosynthesis; L-leucine from 3-methyl-2-oxobutanoate: step 2/4. Catalyzes the isomerization between 2-isopropylmalate and 3-isopropylmalate, via the formation of 2-isopropylmaleate. The sequence is that of 3-isopropylmalate dehydratase large subunit from Streptomyces avermitilis (strain ATCC 31267 / DSM 46492 / JCM 5070 / NBRC 14893 / NCIMB 12804 / NRRL 8165 / MA-4680).